Consider the following 97-residue polypeptide: Co-chaperonin GroES (97 aa).

It belongs to the GroES chaperonin family. As to quaternary structure, heptamer of 7 subunits arranged in a ring. Interacts with the chaperonin GroEL.

The protein resides in the cytoplasm. Its function is as follows. Together with the chaperonin GroEL, plays an essential role in assisting protein folding. The GroEL-GroES system forms a nano-cage that allows encapsulation of the non-native substrate proteins and provides a physical environment optimized to promote and accelerate protein folding. GroES binds to the apical surface of the GroEL ring, thereby capping the opening of the GroEL channel. The polypeptide is Co-chaperonin GroES (Blochmanniella pennsylvanica (strain BPEN)).